A 1241-amino-acid polypeptide reads, in one-letter code: ATP-dependent helicase/nuclease subunit A (1241 aa).

The region spanning 12–485 (SQWTDDQWKA…IDLAKNFRSR (474 aa)) is the UvrD-like helicase ATP-binding domain. 33-40 (AAAGSGKT) is an ATP binding site. One can recognise a UvrD-like helicase C-terminal domain in the interval 505–805 (GEIDYDADAE…RIMTIHKSKG (301 aa)).

Belongs to the helicase family. AddA subfamily. In terms of assembly, heterodimer of AddA and AddB/RexB. Requires Mg(2+) as cofactor.

It catalyses the reaction Couples ATP hydrolysis with the unwinding of duplex DNA by translocating in the 3'-5' direction.. It carries out the reaction ATP + H2O = ADP + phosphate + H(+). The heterodimer acts as both an ATP-dependent DNA helicase and an ATP-dependent, dual-direction single-stranded exonuclease. Recognizes the chi site generating a DNA molecule suitable for the initiation of homologous recombination. The AddA nuclease domain is required for chi fragment generation; this subunit has the helicase and 3' -&gt; 5' nuclease activities. This Bacillus cereus (strain ZK / E33L) protein is ATP-dependent helicase/nuclease subunit A.